A 225-amino-acid polypeptide reads, in one-letter code: Transcriptional activator protein BglJ (225 aa).

One can recognise an HTH luxR-type domain in the interval 146 to 211; sequence YINQSRTLSP…GLLEAADILL (66 aa). Residues 170–189 constitute a DNA-binding region (H-T-H motif); it reads MTQIAEQLKRNIKTIRAHKF.

In terms of assembly, forms a complex with RcsB; genetically both BglJ and RcsB are required to relieve bgl operon repression by H-NS and by StpA.

A crytic transcriptional activator. When its expression is induced it relieves H-NS repression of the bgl operon. Acts independently of transcription factor LeuO. This Escherichia coli (strain K12) protein is Transcriptional activator protein BglJ (bglJ).